Reading from the N-terminus, the 219-residue chain is Ribosomal RNA small subunit methyltransferase G (219 aa).

Residues Gly-81, Leu-86, and Arg-150 each coordinate S-adenosyl-L-methionine.

It belongs to the methyltransferase superfamily. RNA methyltransferase RsmG family.

The protein resides in the cytoplasm. It catalyses the reaction guanosine(527) in 16S rRNA + S-adenosyl-L-methionine = N(7)-methylguanosine(527) in 16S rRNA + S-adenosyl-L-homocysteine. In terms of biological role, specifically methylates the N7 position of guanine in position 527 of 16S rRNA. The sequence is that of Ribosomal RNA small subunit methyltransferase G from Magnetococcus marinus (strain ATCC BAA-1437 / JCM 17883 / MC-1).